A 332-amino-acid chain; its full sequence is Formamidase (332 aa).

The CN hydrolase domain maps to 14 to 259 (FLTALIQYPV…WEIVTAEVYP (246 aa)). The Proton acceptor role is filled by E60. The active-site Proton donor is the K132. C165 functions as the Nucleophile in the catalytic mechanism.

It belongs to the carbon-nitrogen hydrolase superfamily. Aliphatic amidase family.

It catalyses the reaction formamide + H2O = formate + NH4(+). Its function is as follows. Is an aliphatic amidase with a restricted substrate specificity, as it only hydrolyzes formamide. This Bacillus cereus (strain G9842) protein is Formamidase.